The following is a 301-amino-acid chain: 33 kDa chaperonin (301 aa).

2 disulfide bridges follow: Cys239–Cys241 and Cys272–Cys275.

Belongs to the HSP33 family. In terms of processing, under oxidizing conditions two disulfide bonds are formed involving the reactive cysteines. Under reducing conditions zinc is bound to the reactive cysteines and the protein is inactive.

It is found in the cytoplasm. Functionally, redox regulated molecular chaperone. Protects both thermally unfolding and oxidatively damaged proteins from irreversible aggregation. Plays an important role in the bacterial defense system toward oxidative stress. This is 33 kDa chaperonin from Trichormus variabilis (strain ATCC 29413 / PCC 7937) (Anabaena variabilis).